Consider the following 605-residue polypeptide: UvrABC system protein C (605 aa).

Residues 15–92 form the GIY-YIG domain; sequence GLPGCYLMKN…IQKHQPYFNI (78 aa). A UVR domain is found at 197–232; the sequence is GHAKKDLTQRMEKAAADMAYERAGDLRDQIRYIEAT.

The protein belongs to the UvrC family. As to quaternary structure, interacts with UvrB in an incision complex.

The protein resides in the cytoplasm. In terms of biological role, the UvrABC repair system catalyzes the recognition and processing of DNA lesions. UvrC both incises the 5' and 3' sides of the lesion. The N-terminal half is responsible for the 3' incision and the C-terminal half is responsible for the 5' incision. The protein is UvrABC system protein C of Levilactobacillus brevis (strain ATCC 367 / BCRC 12310 / CIP 105137 / JCM 1170 / LMG 11437 / NCIMB 947 / NCTC 947) (Lactobacillus brevis).